We begin with the raw amino-acid sequence, 949 residues long: MSKTRVSNLAEKLGIDTKEVLARLKALGYDAKAGSSTVDDEAVAKLTASRPAESGPEEVRVTTNIVRRRSRPSAAAEPEAEAPAVVEPAAPAAPAVAVEKAAPVIPERVSVVKKAVEAIVAPAVTEAAPVPAAVTAHVDAGTAAEPAVAQEASPAVTAAKPVPATPAAPPQPERASATQARILGMIEIPITPEARPYRREPGRGPGPGGDRGPRPTGGQDNRGPRPAGTQDNRGPRPTGGQDSRGPRPAGAQDSRGPRPAGPPRDAAAPRPAGARPVQLTQVDLPPQGEERRKTLGPNRKPGGPAKDTAADKAKKGAAAKGKGREQLSKQALLSREERQFDPFHKSRKKGKEREEPGKTELTTPKAIKRIIKISETITIGELAKRMGIKATDLIKAMMKMGSMVTINHVLDHDAAVLLASDYGYEVENVAVDLDEILEFTPDAPELLQERPPVVTIMGHVDHGKTSLLDAIREANVIAGEAGGITQHIGAYDVELHGRKITFLDTPGHEAFTAMRARGAKVTDIVILVVAADDGVMPQTKEAINHSKAAGVPIIVAINKIDKPDARPEKVKQELTEHGIVSSEWGGDVTMVEVSAKKRLNLEELLEMILLQADLMDLKANPDKAAKGTIVEGKLDKGRGPVATVLVQEGTLRTGDYCVVGVHSGRVRAMQNDRGERVLAAGPAMPVEVVGLPGVPDAGDIFVAMTDEKQAKEIATLRQIKQRELELAKHAKMSLEQLYEKIQKGEVKDLNVIVKADVQGSVEAVAESLRKLSTEAVRLNVIHTAVGAITETDVNLATASNAIIIGFSIRPEVKAQAMAEKEGVDIRLYNVIYDAVDDVRKAMEGLLEPVFKEKYLGRAEIREIFSVPKVGNVAGCYIQDGKILRNAQVRLLRDNVVVYQGKLGTLRRFKDDVKEVATGYECGMGLENYNDIKVGDIIEAFEMEKVAAKL.

Disordered stretches follow at residues 46-82, 145-176, and 188-361; these read LTAS…EAEA, EPAV…ERAS, and IPIT…KTEL. Positions 152–162 are enriched in low complexity; sequence ASPAVTAAKPV. Pro residues predominate over residues 163-172; it reads PATPAAPPQP. Residues 263–276 are compositionally biased toward low complexity; sequence PRDAAAPRPAGARP. A compositionally biased stretch (basic and acidic residues) spans 334–344; the sequence is SREERQFDPFH. Positions 449 to 618 constitute a tr-type G domain; sequence ERPPVVTIMG…LLQADLMDLK (170 aa). Residues 458–465 form a G1 region; that stretch reads GHVDHGKT. Residue 458 to 465 participates in GTP binding; that stretch reads GHVDHGKT. The tract at residues 483–487 is G2; the sequence is GITQH. The interval 504–507 is G3; that stretch reads DTPG. GTP contacts are provided by residues 504–508 and 558–561; these read DTPGH and NKID. Residues 558–561 are G4; it reads NKID. The interval 594 to 596 is G5; that stretch reads SAK.

The protein belongs to the TRAFAC class translation factor GTPase superfamily. Classic translation factor GTPase family. IF-2 subfamily.

It localises to the cytoplasm. Its function is as follows. One of the essential components for the initiation of protein synthesis. Protects formylmethionyl-tRNA from spontaneous hydrolysis and promotes its binding to the 30S ribosomal subunits. Also involved in the hydrolysis of GTP during the formation of the 70S ribosomal complex. In Trichlorobacter lovleyi (strain ATCC BAA-1151 / DSM 17278 / SZ) (Geobacter lovleyi), this protein is Translation initiation factor IF-2.